Here is a 164-residue protein sequence, read N- to C-terminus: FMN reductase (NADH) RutF (164 aa).

It belongs to the non-flavoprotein flavin reductase family. RutF subfamily.

It catalyses the reaction FMNH2 + NAD(+) = FMN + NADH + 2 H(+). In terms of biological role, catalyzes the reduction of FMN to FMNH2 which is used to reduce pyrimidine by RutA via the Rut pathway. This is FMN reductase (NADH) RutF from Enterobacter cloacae subsp. cloacae (strain ATCC 13047 / DSM 30054 / NBRC 13535 / NCTC 10005 / WDCM 00083 / NCDC 279-56).